The sequence spans 329 residues: COP9 signalosome complex subunit 6 (329 aa).

An MPN domain is found at 44–175 (TRVKAQAACS…VTIYESELHV (132 aa)).

This sequence belongs to the peptidase M67A family. CSN6 subfamily. As to quaternary structure, component of the CSN complex, probably composed of CSN1, CSN2, CSN3, CSN4, CSN5, CSN6, CSN7 and CSN8.

Functionally, component of the COP9 signalosome complex (CSN), a complex involved in various cellular and developmental processes such as photomorphogenesis and response to hormones. The CSN complex is an essential regulator of the ubiquitin (Ubl) conjugation pathway by mediating the deneddylation of the cullin subunits of SCF-type E3 ligase complexes, leading to decrease the Ubl ligase activity of SCF. Involved in early response to iron deficiency. This chain is COP9 signalosome complex subunit 6, found in Oryza sativa subsp. japonica (Rice).